The chain runs to 86 residues: Large ribosomal subunit protein bL31B (86 aa).

Belongs to the bacterial ribosomal protein bL31 family. Type B subfamily. Part of the 50S ribosomal subunit.

This Chloroherpeton thalassium (strain ATCC 35110 / GB-78) protein is Large ribosomal subunit protein bL31B.